A 421-amino-acid chain; its full sequence is Gamma-glutamyl phosphate reductase (421 aa).

Belongs to the gamma-glutamyl phosphate reductase family.

The protein localises to the cytoplasm. The catalysed reaction is L-glutamate 5-semialdehyde + phosphate + NADP(+) = L-glutamyl 5-phosphate + NADPH + H(+). Its pathway is amino-acid biosynthesis; L-proline biosynthesis; L-glutamate 5-semialdehyde from L-glutamate: step 2/2. Functionally, catalyzes the NADPH-dependent reduction of L-glutamate 5-phosphate into L-glutamate 5-semialdehyde and phosphate. The product spontaneously undergoes cyclization to form 1-pyrroline-5-carboxylate. The sequence is that of Gamma-glutamyl phosphate reductase from Nitrosospira multiformis (strain ATCC 25196 / NCIMB 11849 / C 71).